Consider the following 412-residue polypeptide: 4-hydroxyphenylpyruvate dioxygenase (412 aa).

VOC domains follow at residues 31–179 (GYDH…LISR) and 209–369 (RIDH…LFTK). The Fe cation site is built by H212, H295, and E380.

Belongs to the 4HPPD family. Fe cation is required as a cofactor.

The enzyme catalyses 3-(4-hydroxyphenyl)pyruvate + O2 = homogentisate + CO2. Its pathway is amino-acid degradation; L-phenylalanine degradation; acetoacetate and fumarate from L-phenylalanine: step 3/6. This is 4-hydroxyphenylpyruvate dioxygenase from Neurospora crassa (strain ATCC 24698 / 74-OR23-1A / CBS 708.71 / DSM 1257 / FGSC 987).